A 261-amino-acid chain; its full sequence is (R)-S-adenosyl-L-methionine hydrolase (261 aa).

Aspartate 12, aspartate 72, and asparagine 187 together coordinate adenosine. Positions 187, 231, and 239 each coordinate (R)-S-adenosyl-L-methionine. Valine 239 is a binding site for adenosine.

The protein belongs to the SAM hydrolase / SAM-dependent halogenase family.

The enzyme catalyses (R)-S-adenosyl-L-methionine + H2O = adenosine + L-methionine + H(+). Specifically hydrolyzes (R)-S-adenosyl-L-methionine ((R)-SAM), the inactive form of the ubiquitous cofactor SAM, into adenosine and L-methionine. Is stereoselective as it cannot use the active form of SAM, (S)-S-adenosyl-L-methionine, as substrate. Likely plays a role in preventing accumulation of (R)-S-adenosyl-L-methionine in cells; maintenance of (S)-S-denosyl-L-methionine homochirality is important for cellular health given that the (R)-form is largely inactive as a methyl donor and can function as an inhibitor of methyltransferases. This Salinispora tropica (strain ATCC BAA-916 / DSM 44818 / JCM 13857 / NBRC 105044 / CNB-440) protein is (R)-S-adenosyl-L-methionine hydrolase.